Here is a 280-residue protein sequence, read N- to C-terminus: Pre-mRNA-splicing factor PRP21 (280 aa).

The stretch at 11 to 49 (DIKTTVNYIKQHGVEFENKLLEDERFSFIKKDDPLHEYY) is one SURP motif 1 repeat. A disordered region spans residues 53-72 (MNEPTDTVSGEDNDRKSERE). Residues 95–135 (VIKLTARYYAKDKSIVEQMISKDGEARLNFMNSSHPLHKTF) form an SURP motif 2 repeat. Basic and acidic residues-rich tracts occupy residues 246–261 (EKIV…GDSK) and 269–280 (AVGETRLKKSKK). Residues 246 to 280 (EKIVSDQGKQKGGDSKGKKRKIRAVGETRLKKSKK) form a disordered region.

Belongs to the CWC complex (or CEF1-associated complex), a spliceosome sub-complex reminiscent of a late-stage spliceosome composed of the U2, U5 and U6 snRNAs and at least BUD13, BUD31, BRR2, CDC40, CEF1, CLF1, CUS1, CWC2, CWC15, CWC21, CWC22, CWC23, CWC24, CWC25, CWC27, ECM2, HSH155, IST3, ISY1, LEA1, MSL1, NTC20, PRP8, PRP9, PRP11, PRP19, PRP21, PRP22, PRP45, PRP46, SLU7, SMB1, SMD1, SMD2, SMD3, SMX2, SMX3, SNT309, SNU114, SPP2, SYF1, SYF2, RSE1 and YJU2.

It localises to the nucleus. Functionally, mRNA splicing factors, PRP9, PRP11, and PRP21, are necessary for binding of the U2 snRNP to the pre-mRNA in an early step of spliceosome assembly. The polypeptide is Pre-mRNA-splicing factor PRP21 (PRP21) (Saccharomyces cerevisiae (strain ATCC 204508 / S288c) (Baker's yeast)).